The chain runs to 505 residues: RNA-splicing ligase RtcB homolog (505 aa).

Mn(2+) contacts are provided by aspartate 119, cysteine 122, histidine 227, histidine 259, and histidine 353. Residue 226–230 (NHYAE) participates in GMP binding. Residues 353-354 (HN), 402-405 (GGTM), serine 409, 428-431 (HGAG), and lysine 504 each bind GMP. Histidine 428 functions as the GMP-histidine intermediate in the catalytic mechanism.

This sequence belongs to the RtcB family. In terms of assembly, catalytic component of the tRNA-splicing ligase complex. Mn(2+) is required as a cofactor.

It localises to the nucleus. The protein localises to the cytoplasm. It carries out the reaction a 3'-end 3'-phospho-ribonucleotide-RNA + a 5'-end dephospho-ribonucleoside-RNA + GTP = a ribonucleotidyl-ribonucleotide-RNA + GMP + diphosphate. The catalysed reaction is a 3'-end 2',3'-cyclophospho-ribonucleotide-RNA + a 5'-end dephospho-ribonucleoside-RNA + GTP + H2O = a ribonucleotidyl-ribonucleotide-RNA + GMP + diphosphate + H(+). Catalytic subunit of the tRNA-splicing ligase complex that acts by directly joining spliced tRNA halves to mature-sized tRNAs by incorporating the precursor-derived splice junction phosphate into the mature tRNA as a canonical 3',5'-phosphodiester. May act as an RNA ligase with broad substrate specificity, and may function toward other RNAs. This chain is RNA-splicing ligase RtcB homolog, found in Xenopus tropicalis (Western clawed frog).